We begin with the raw amino-acid sequence, 344 residues long: Axoneme-associated protein mst101(1) (344 aa).

A run of 12 repeats spans residues 74 to 89 (KKKC…EAAE), 90 to 105 (KKKC…EAAE), 106 to 121 (KKKC…EAAE), 122 to 137 (KKKC…EAAE), 138 to 153 (KKKC…EAAE), 154 to 169 (KKKC…EAAE), 170 to 185 (KKKC…CAEL), 186 to 201 (AKKE…CAEA), 202 to 217 (AKKE…CEER), 218 to 233 (AKKE…CEER), 234 to 249 (AKKE…CAEA), and 250 to 265 (AKKE…CAEA). Positions 74-344 (KKKCAEAAKK…AAQKKCEPKK (271 aa)) are 17 X 16 AA approximate tandem repeats of K-K-K-C-X-E-X-A-[KQ]-K-X-X-E-X-A-X. The disordered stretch occupies residues 206–244 (KEAAEKKKCEERAKKEKEAAEKKKCEERAKKEKEAAEKK). Residues 266–281 (AQKKKCAELAKKAKEA) form a 13; approximate repeat. A 14; approximate repeat occupies 282–297 (AEKKKCAKKAGEKGSK). Positions 285–315 (KKCAKKAGEKGSKQSGSDKGKKNGKKNDMKN) are enriched in basic and acidic residues. Residues 285 to 318 (KKCAKKAGEKGSKQSGSDKGKKNGKKNDMKNKCA) are disordered. Residues 298–313 (QSGSDKGKKNGKKNDM) form a 15; approximate repeat. Residues 314-329 (KNKCAMLAKKAKEEAL) form repeat 16. A 17; truncated repeat occupies 330–344 (KKKCAAAQKKCEPKK).

In terms of tissue distribution, testis. Located in spermatocytes and spermatid bundles.

Its subcellular location is the cytoplasm. Possible structural role in the sperm tail. It is associated with axonemal structures. This is Axoneme-associated protein mst101(1) (mst101(1)) from Drosophila hydei (Fruit fly).